Consider the following 483-residue polypeptide: Altronate oxidoreductase (483 aa).

18 to 29 (IIQFGEGNFLRA) serves as a coordination point for NAD(+).

It belongs to the mannitol dehydrogenase family. UxaB subfamily.

It catalyses the reaction D-altronate + NAD(+) = keto-D-tagaturonate + NADH + H(+). Its pathway is carbohydrate metabolism; pentose and glucuronate interconversion. This chain is Altronate oxidoreductase, found in Escherichia coli O17:K52:H18 (strain UMN026 / ExPEC).